Here is a 516-residue protein sequence, read N- to C-terminus: Golgi-associated kinase 1B (516 aa).

Topologically, residues Met1 to Asn37 are cytoplasmic. Residues Leu38–Val55 traverse the membrane as a helical; Signal-anchor for type II membrane protein segment. The Extracellular segment spans residues Gly56–Glu516. The N-linked (GlcNAc...) asparagine glycan is linked to Asn286.

It belongs to the GASK family.

It is found in the golgi apparatus membrane. This is Golgi-associated kinase 1B from Rattus norvegicus (Rat).